We begin with the raw amino-acid sequence, 522 residues long: Target of rapamycin complex 2 subunit MAPKAP1 (522 aa).

Alanine 2 carries the post-translational modification N-acetylalanine. The interaction with MAP3K2 stretch occupies residues 2–184 (AFLDNPTIIL…KKIDVYLPLH (183 aa)). The segment at 2–267 (AFLDNPTIIL…GFSTLALVEK (266 aa)) is interaction with NBN. The residue at position 86 (threonine 86) is a Phosphothreonine. Serine 128, serine 186, serine 315, and serine 356 each carry phosphoserine. One can recognise a CRIM domain in the interval 139-267 (QSILSVRLEQ…GFSTLALVEK (129 aa)). The tract at residues 279–353 (LFVRINAAHG…QSAWEFCLVR (75 aa)) is SIN1-type RBD. The 106-residue stretch at 382 to 487 (HYKSFKVSMI…IVLKVNYILE (106 aa)) folds into the SIN1-type PH domain. Arginine 393 lines the a 1,2-diacyl-sn-glycero-3-phospho-(1D-myo-inositol-3,4,5-trisphosphate) pocket. Threonine 398 is subject to Phosphothreonine. Positions 428 and 464 each coordinate a 1,2-diacyl-sn-glycero-3-phospho-(1D-myo-inositol-3,4,5-trisphosphate). Residues 468–522 (FESDAATVNEIVLKVNYILESRASTARADYFAQKQRKLNRRTSFSFQKEKKSGQQ) are interaction with ATF2. The residue at position 510 (serine 510) is a Phosphoserine.

The protein belongs to the SIN1 family. As to quaternary structure, component of the mechanistic target of rapamycin complex 2 (mTORC2), consisting in two heterotretramers composed of MTOR, MLST8, RICTOR and MAPKAP1/SIN1. The mTORC2 core complex associates with PRR5/PROTOR1 and/or PRR5L/PROTOR2. Contrary to mTORC1, mTORC2 does not bind to and is not sensitive to FKBP12-rapamycin. Interacts with MAP3K2. Interacts with ATF2. Interacts with MAPK8. Interacts with GTP-bound HRAS and KRAS; inhibiting their activity. Interacts with IFNAR2. In terms of assembly, interacts with CCDC28B. Interacts with NBN. Phosphorylation at Ser-128 by PKC promotes relocalization to the perinuclear region, where the mTORC2 complex specifically mediates phosphorylation of SGK1. Phosphorylated at Thr-86 by AKT1 or RPS6KB1 in the presence of growth factors; the effect of this phosphorylation is however unclear. According to two studies, phosphorylation at Thr-86 by AKT1 is part of a positive feedback loop that increases mTORC2 activation. According to another study, phosphorylation at Thr-86 and Thr-398 by RPS6KB1 promotes dissociation from the mTORC2 complex, leading to inhibit mTORC2 signaling. In terms of tissue distribution, ubiquitously expressed, with highest levels in heart and skeletal muscle.

It localises to the cell membrane. The protein resides in the endoplasmic reticulum membrane. Its subcellular location is the early endosome membrane. It is found in the late endosome membrane. The protein localises to the lysosome membrane. It localises to the golgi apparatus membrane. The protein resides in the mitochondrion outer membrane. Its subcellular location is the cytoplasm. It is found in the perinuclear region. The protein localises to the nucleus. It localises to the cytosol. Its activity is regulated as follows. Phosphatidylinositol 3,4,5-trisphosphate (PI(3,4,5)P3) promotes MTOR activation by relieving MAPKAP1/SIN1-mediated inhibition of MTOR that takes place in absence of PI(3,4,5)P3. Component of the mechanistic target of rapamycin complex 2 (mTORC2), which transduces signals from growth factors to pathways involved in proliferation, cytoskeletal organization, lipogenesis and anabolic output. In response to growth factors, mTORC2 phosphorylates and activates AGC protein kinase family members, including AKT (AKT1, AKT2 and AKT3), PKC (PRKCA, PRKCB and PRKCE) and SGK1. In contrast to mTORC1, mTORC2 is nutrient-insensitive. Within the mTORC2 complex, MAPKAP1/SIN1 acts as a substrate adapter which recognizes and binds AGC protein kinase family members for phosphorylation by MTOR. mTORC2 plays a critical role in AKT1 activation by mediating phosphorylation of different sites depending on the context, such as 'Thr-450', 'Ser-473', 'Ser-477' or 'Thr-479', facilitating the phosphorylation of the activation loop of AKT1 on 'Thr-308' by PDPK1/PDK1 which is a prerequisite for full activation. mTORC2 catalyzes the phosphorylation of SGK1 at 'Ser-422' and of PRKCA on 'Ser-657'. The mTORC2 complex also phosphorylates various proteins involved in insulin signaling, such as FBXW8 and IGF2BP1. mTORC2 acts upstream of Rho GTPases to regulate the actin cytoskeleton, probably by activating one or more Rho-type guanine nucleotide exchange factors. mTORC2 promotes the serum-induced formation of stress-fibers or F-actin. MAPKAP1 inhibits MAP3K2 by preventing its dimerization and autophosphorylation. Inhibits HRAS and KRAS independently of mTORC2 complex. Enhances osmotic stress-induced phosphorylation of ATF2 and ATF2-mediated transcription. Involved in ciliogenesis, regulates cilia length through its interaction with CCDC28B independently of mTORC2 complex. Functionally, in contrast to isoform 1, isoform 2 and isoform 6, isoform 4 is not a component of the a mTORC2 complex. The sequence is that of Target of rapamycin complex 2 subunit MAPKAP1 from Homo sapiens (Human).